The chain runs to 42 residues: uncharacterized protein (42 aa).

This is an uncharacterized protein from Treponema pallidum (strain Nichols).